The primary structure comprises 28 residues: GSLCGDTCFVLGCNDSSCSCNYPICVKD.

Residues 1-28 (GSLCGDTCFVLGCNDSSCSCNYPICVKD) constitute a cross-link (cyclopeptide (Gly-Asp)). Disulfide bonds link Cys-4–Cys-18, Cys-8–Cys-20, and Cys-13–Cys-25.

This is a cyclic peptide.

Its function is as follows. Probably participates in a plant defense mechanism. The sequence is that of Kalata-B12 from Oldenlandia affinis.